The primary structure comprises 405 residues: Venom serine protease 34 (405 aa).

The signal sequence occupies residues 1 to 35 (MIFTNNIAAFQNVVLVKKVKIVLLIFYGSIMFSMT). Cystine bridges form between cysteine 42/cysteine 70 and cysteine 95/cysteine 111. A CUB domain is found at 42 to 147 (CDYYQNLNLG…EVRPIKRVKD (106 aa)). N-linked (GlcNAc...) asparagine glycosylation is present at asparagine 113. The Peptidase S1 domain occupies 161–397 (IVGGTNTGIN…YIDWIVSQTP (237 aa)). Cysteine 188 and cysteine 204 are oxidised to a cystine. The active-site Charge relay system is the histidine 203. N-linked (GlcNAc...) asparagine glycans are attached at residues asparagine 209 and asparagine 229. The Charge relay system role is filled by aspartate 257. Disulfide bonds link cysteine 323-cysteine 336 and cysteine 345-cysteine 375. Residue serine 349 is the Charge relay system of the active site.

The protein belongs to the peptidase S1 family. As to expression, expressed by the venom duct.

The protein resides in the secreted. The polypeptide is Venom serine protease 34 (Apis mellifera (Honeybee)).